Here is a 124-residue protein sequence, read N- to C-terminus: Small ribosomal subunit protein uS13 (124 aa).

Residues 87–124 are disordered; it reads GSYRGNRHRKRLPVRGQRTKTNSRTRKGKRRTVGSKTK. Residues 91–124 are compositionally biased toward basic residues; sequence GNRHRKRLPVRGQRTKTNSRTRKGKRRTVGSKTK.

This sequence belongs to the universal ribosomal protein uS13 family. As to quaternary structure, part of the 30S ribosomal subunit. Forms a loose heterodimer with protein S19. Forms two bridges to the 50S subunit in the 70S ribosome.

In terms of biological role, located at the top of the head of the 30S subunit, it contacts several helices of the 16S rRNA. In the 70S ribosome it contacts the 23S rRNA (bridge B1a) and protein L5 of the 50S subunit (bridge B1b), connecting the 2 subunits; these bridges are implicated in subunit movement. Contacts the tRNAs in the A and P-sites. The protein is Small ribosomal subunit protein uS13 of Elusimicrobium minutum (strain Pei191).